Here is a 279-residue protein sequence, read N- to C-terminus: Release factor glutamine methyltransferase (279 aa).

Aspartate 139 and asparagine 182 together coordinate S-adenosyl-L-methionine. Substrate is bound at residue 182 to 185 (NPPY).

This sequence belongs to the protein N5-glutamine methyltransferase family. PrmC subfamily.

The catalysed reaction is L-glutaminyl-[peptide chain release factor] + S-adenosyl-L-methionine = N(5)-methyl-L-glutaminyl-[peptide chain release factor] + S-adenosyl-L-homocysteine + H(+). Methylates the class 1 translation termination release factors RF1/PrfA and RF2/PrfB on the glutamine residue of the universally conserved GGQ motif. This is Release factor glutamine methyltransferase from Thermodesulfovibrio yellowstonii (strain ATCC 51303 / DSM 11347 / YP87).